The following is a 431-amino-acid chain: MFMSQIVDIRAREILDSRGNPTIEADVILESGVVGRACAPSGASTGSREALELRDGDKSRYLGKGVRTAVQNVNSSIHELLVGQSVFEQKALDEKMIAFDGTENKSKLGANATLAVSLAAAHAAAAEQKLPLFQYIANLRGQTTLTMPVPMMNILNGGAHADNTVDIQEFMIEPVGFTSFAEALRAGAEVFHSLKSVLKKQGLNTAVGDEGGFAPNLRSNEEAITVILQAIEQTGYKAGSDIMLALDCASSEFYKNGQYILEGEGNKSFTSNQFADYLAGLVKQYPIISIEDGLDESDWEGWSYLTSILGDKIQLVGDDLFVTNPKILQRGIDEKVGNSILIKYNQIGTLTETLDAIYLAKANGYTTVISHRSGETEDSTIADLAVGTAAGQIKTGSLCRSDRVSKYNQLLRIEELTKAVYRGKAEFKGLK.

(2R)-2-phosphoglycerate is bound at residue glutamine 168. The Proton donor role is filled by glutamate 210. Aspartate 247, glutamate 291, and aspartate 318 together coordinate Mg(2+). Positions 343, 372, 373, and 394 each coordinate (2R)-2-phosphoglycerate. The Proton acceptor role is filled by lysine 343.

This sequence belongs to the enolase family. Component of the RNA degradosome, a multiprotein complex involved in RNA processing and mRNA degradation. Requires Mg(2+) as cofactor.

Its subcellular location is the cytoplasm. It is found in the secreted. It localises to the cell surface. It catalyses the reaction (2R)-2-phosphoglycerate = phosphoenolpyruvate + H2O. The protein operates within carbohydrate degradation; glycolysis; pyruvate from D-glyceraldehyde 3-phosphate: step 4/5. Catalyzes the reversible conversion of 2-phosphoglycerate (2-PG) into phosphoenolpyruvate (PEP). It is essential for the degradation of carbohydrates via glycolysis. The chain is Enolase from Acinetobacter baumannii (strain SDF).